A 184-amino-acid chain; its full sequence is Large ribosomal subunit protein uL5 (184 aa).

The protein belongs to the universal ribosomal protein uL5 family. Component of the large ribosomal subunit. Interacts with Fmr1 to form the RNA-induced silencing complex (RISC), a ribonucleoprotein (RNP) complex involved in translation regulation, other components of the complex are RpL5, Rm62, AGO2 and Dcr-1.

Its subcellular location is the nucleus. It localises to the cytoplasm. In terms of biological role, component of the ribosome, a large ribonucleoprotein complex responsible for the synthesis of proteins in the cell. The small ribosomal subunit (SSU) binds messenger RNAs (mRNAs) and translates the encoded message by selecting cognate aminoacyl-transfer RNA (tRNA) molecules. The large subunit (LSU) contains the ribosomal catalytic site termed the peptidyl transferase center (PTC), which catalyzes the formation of peptide bonds, thereby polymerizing the amino acids delivered by tRNAs into a polypeptide chain. The nascent polypeptides leave the ribosome through a tunnel in the LSU and interact with protein factors that function in enzymatic processing, targeting, and the membrane insertion of nascent chains at the exit of the ribosomal tunnel. The polypeptide is Large ribosomal subunit protein uL5 (RpL11) (Drosophila melanogaster (Fruit fly)).